The chain runs to 528 residues: Peptide chain release factor 3 (528 aa).

The tr-type G domain maps to aspartate 10 to glutamine 278. GTP is bound by residues serine 19–threonine 26, aspartate 87–histidine 91, and asparagine 141–aspartate 144.

Belongs to the TRAFAC class translation factor GTPase superfamily. Classic translation factor GTPase family. PrfC subfamily.

It is found in the cytoplasm. Increases the formation of ribosomal termination complexes and stimulates activities of RF-1 and RF-2. It binds guanine nucleotides and has strong preference for UGA stop codons. It may interact directly with the ribosome. The stimulation of RF-1 and RF-2 is significantly reduced by GTP and GDP, but not by GMP. The sequence is that of Peptide chain release factor 3 from Oleidesulfovibrio alaskensis (strain ATCC BAA-1058 / DSM 17464 / G20) (Desulfovibrio alaskensis).